Here is a 305-residue protein sequence, read N- to C-terminus: tRNA pseudouridine synthase B (305 aa).

The Nucleophile role is filled by aspartate 39. The PUA domain maps to leucine 237–lysine 305.

The protein belongs to the pseudouridine synthase TruB family. Type 1 subfamily.

It carries out the reaction uridine(55) in tRNA = pseudouridine(55) in tRNA. Responsible for synthesis of pseudouridine from uracil-55 in the psi GC loop of transfer RNAs. In Moorella thermoacetica (strain ATCC 39073 / JCM 9320), this protein is tRNA pseudouridine synthase B.